We begin with the raw amino-acid sequence, 24 residues long: Tryptophanase operon leader peptide (24 aa).

The chain is Tryptophanase operon leader peptide (tnaL) from Escherichia coli O157:H7.